The following is an 84-amino-acid chain: Anthracycline acyl carrier protein DpsG (84 aa).

The region spanning 3-80 (ELSLAELREI…SMLIFVNERL (78 aa)) is the Carrier domain. Position 40 is an O-(pantetheine 4'-phosphoryl)serine (Ser40).

The protein operates within antibiotic biosynthesis; daunorubicin biosynthesis. It functions in the pathway antibiotic biosynthesis; carminomycin biosynthesis. Its pathway is antibiotic biosynthesis; rhodomycin biosynthesis. It participates in antibiotic biosynthesis; aclacinomycin biosynthesis. Involved in the biosynthesis of aklanonate which is an important precursor common to the formation of the clinically significant anthracyclines such as carminomycin, daunorubicin (daunomycin), rhodomycin, aclacinomycin T (aklavin) and aclacinomycin A (aclarubicin). These compounds are aromatic polyketide antibiotics that exhibit high cytotoxicity and are widely applied in the chemotherapy of a variety of cancers. The sequence is that of Anthracycline acyl carrier protein DpsG (dpsG) from Streptomyces peucetius.